A 142-amino-acid polypeptide reads, in one-letter code: Protein E6 (142 aa).

2 zinc fingers span residues Cys30–Cys66 and Cys103–Cys139.

It belongs to the papillomaviridae E6 protein family. As to quaternary structure, forms homodimers. Interacts with ubiquitin-protein ligase UBE3A/E6-AP; this interaction stimulates UBE3A ubiquitin activity. Interacts with host BAK1.

The protein localises to the host cytoplasm. Its subcellular location is the host nucleus. Plays a major role in the induction and maintenance of cellular transformation. E6 associates with host UBE3A/E6-AP ubiquitin-protein ligase and modulates its activity. Protects host keratinocytes from apoptosis by mediating the degradation of host BAK1. May also inhibit host immune response. This chain is Protein E6, found in Homo sapiens (Human).